Here is a 664-residue protein sequence, read N- to C-terminus: Lamin tail domain-containing protein 2 (664 aa).

Residues methionine 1–alanine 40 form a disordered region. The stretch at glutamine 118–glutamine 169 forms a coiled coil. The span at serine 245–leucine 260 shows a compositional bias: polar residues. Disordered stretches follow at residues serine 245–proline 272 and threonine 286–histidine 329. Residues threonine 286 to serine 298 show a composition bias toward low complexity. Positions glycine 312 to glutamine 325 are enriched in polar residues. The 120-residue stretch at proline 362 to proline 481 folds into the LTD domain. The disordered stretch occupies residues serine 504–threonine 563. Basic residues predominate over residues arginine 533–serine 547.

This Mus musculus (Mouse) protein is Lamin tail domain-containing protein 2 (Lmntd2).